Here is a 434-residue protein sequence, read N- to C-terminus: uncharacterized protein (434 aa).

Positions 1-17 (MTFLLFQLLVLLRYSIG) are cleaved as a signal peptide. 12 consecutive transmembrane segments (helical) span residues 48 to 68 (AAISLDFIFIVFPMLLFFTVL), 70 to 90 (EWVYHGTGLLSLLVLILSVTA), 112 to 132 (YRVALMLITCLCILAVDFTIF), 141 to 161 (TYGTSLMDLGVGSFVLANAVV), 173 to 193 (WITGIKATAPLLLLGFIRLVT), 206 to 226 (YGVHWNFFFTLAAISILTSFV), 232 to 252 (YCGLLGFAVLAGYQTWLLSGL), 271 to 291 (EGVYSILGYWGMYLLGVHLGY), 305 to 325 (TSSIARVFLVSLLLWIVTILF), 344 to 364 (WVLAQDLQALGIFMLSSYIPL), 380 to 400 (ATFLLANLVTGMVNLTVDTIF), and 404 to 424 (FSSLLILTAYAFALSAIIGTI).

It is found in the membrane. This is an uncharacterized protein from Arabidopsis thaliana (Mouse-ear cress).